A 746-amino-acid chain; its full sequence is MSSDTSSSRPPQPDSGTASKSESENPAIPSPKPKAHAPLTNRDWWPDQVDVSSLHPHSPLSNPLGDDFDYAAEFAKLDVEALKADMISLMTTSQDWWPADYGHYGGLFIRMSWHAAGTYRIHDGRGGAGQGMQRFAPLNSWPDNASLDKARRLLWPIKKKYGNKISWADLITYAGNVALESMGFKTFGFGFGREDVWEPEEILWGEEEEWLGTDKRYSGERELAQPYGATTMGLIYVNPEGPEGKPDPIAAAIDIRETFGRMAMNDEETAALIVGGHSFGKTHGAGDADLVGPEPEAAPIEQQGLGWKSSYGTGSGKDAITSGLEVVWTPTPTKWDNSFLETLYGYEWELTKSPAGAWQFTAKDGAGAGTIPDPFGGAGRAPTMLVTDISLRESPIYADITRRWLDHPEELADAFAKAWYKLLHRDMGPISRYLGPWVAEPQLWQDPVPAVDHELVDDNDVAALKKKVLDSGLSIPQLVKTAWSAAASYRNTDKRGGANGGRLRLQPQRSWEVNEPSELDKVLPVLEKIQQDFNASASGGKKISLADLIVLAGSAAVEKAAKDAGYEISVHFAPGRTDASQESTDVESFAVLEPRADGFRNYIRPGEKAPLEQLLIERAYLLGVTGPEMTVLVGGLRALGANHGSSKHGVFTDRPGALTNDFFVNLLDMGTEWKASETAENVYEGRDRASGALKWTATANDLVFGSNSVLRGLVEVYAQDDAHGKFVEDFVAAWVKVMNSDRFDLK.

The segment covering 1 to 20 (MSSDTSSSRPPQPDSGTASK) has biased composition (polar residues). Residues 1 to 42 (MSSDTSSSRPPQPDSGTASKSESENPAIPSPKPKAHAPLTNR) are disordered. Residues 113 to 236 (WHAAGTYRIH…YGATTMGLIY (124 aa)) constitute a cross-link (tryptophyl-tyrosyl-methioninium (Trp-Tyr) (with M-262)). H114 serves as the catalytic Proton acceptor. The tryptophyl-tyrosyl-methioninium (Tyr-Met) (with W-113) cross-link spans 236–262 (YVNPEGPEGKPDPIAAAIDIRETFGRM). H277 contributes to the heme b binding site.

Belongs to the peroxidase family. Peroxidase/catalase subfamily. In terms of assembly, homodimer or homotetramer. Requires heme b as cofactor. Formation of the three residue Trp-Tyr-Met cross-link is important for the catalase, but not the peroxidase activity of the enzyme.

It carries out the reaction H2O2 + AH2 = A + 2 H2O. The catalysed reaction is 2 H2O2 = O2 + 2 H2O. Bifunctional enzyme with both catalase and broad-spectrum peroxidase activity. May play a role in the intracellular survival of mycobacteria. In Mycobacterium intracellulare, this protein is Catalase-peroxidase.